The primary structure comprises 513 residues: ATP synthase subunit alpha (513 aa).

169–176 is an ATP binding site; sequence GDRQTGKT.

The protein belongs to the ATPase alpha/beta chains family. In terms of assembly, F-type ATPases have 2 components, CF(1) - the catalytic core - and CF(0) - the membrane proton channel. CF(1) has five subunits: alpha(3), beta(3), gamma(1), delta(1), epsilon(1). CF(0) has three main subunits: a(1), b(2) and c(9-12). The alpha and beta chains form an alternating ring which encloses part of the gamma chain. CF(1) is attached to CF(0) by a central stalk formed by the gamma and epsilon chains, while a peripheral stalk is formed by the delta and b chains.

It localises to the cell membrane. The enzyme catalyses ATP + H2O + 4 H(+)(in) = ADP + phosphate + 5 H(+)(out). Functionally, produces ATP from ADP in the presence of a proton gradient across the membrane. The alpha chain is a regulatory subunit. This chain is ATP synthase subunit alpha, found in Polynucleobacter asymbioticus (strain DSM 18221 / CIP 109841 / QLW-P1DMWA-1) (Polynucleobacter necessarius subsp. asymbioticus).